The following is a 164-amino-acid chain: 6,7-dimethyl-8-ribityllumazine synthase (164 aa).

5-amino-6-(D-ribitylamino)uracil-binding positions include phenylalanine 24, 62–64, and 86–88; these read SFE and AVI. Residue 91–92 coordinates (2S)-2-hydroxy-3-oxobutyl phosphate; sequence QT. The active-site Proton donor is the histidine 94. Phenylalanine 119 is a 5-amino-6-(D-ribitylamino)uracil binding site. Arginine 133 serves as a coordination point for (2S)-2-hydroxy-3-oxobutyl phosphate.

This sequence belongs to the DMRL synthase family.

The catalysed reaction is (2S)-2-hydroxy-3-oxobutyl phosphate + 5-amino-6-(D-ribitylamino)uracil = 6,7-dimethyl-8-(1-D-ribityl)lumazine + phosphate + 2 H2O + H(+). It functions in the pathway cofactor biosynthesis; riboflavin biosynthesis; riboflavin from 2-hydroxy-3-oxobutyl phosphate and 5-amino-6-(D-ribitylamino)uracil: step 1/2. In terms of biological role, catalyzes the formation of 6,7-dimethyl-8-ribityllumazine by condensation of 5-amino-6-(D-ribitylamino)uracil with 3,4-dihydroxy-2-butanone 4-phosphate. This is the penultimate step in the biosynthesis of riboflavin. The protein is 6,7-dimethyl-8-ribityllumazine synthase of Synechocystis sp. (strain ATCC 27184 / PCC 6803 / Kazusa).